We begin with the raw amino-acid sequence, 436 residues long: GTPase Der (436 aa).

EngA-type G domains are found at residues 4–167 (PIVA…GEEE) and 176–351 (IRLS…ENHK). Residues 10-17 (GRPNVGKS), 57-61 (DTGGI), 119-122 (NKVD), 182-189 (GRPNVGKS), 229-233 (DTAGM), and 294-297 (NKWD) contribute to the GTP site. Positions 352–436 (KRVQSSTLNE…PIHIIARKRN (85 aa)) constitute a KH-like domain.

This sequence belongs to the TRAFAC class TrmE-Era-EngA-EngB-Septin-like GTPase superfamily. EngA (Der) GTPase family. In terms of assembly, associates with the 50S ribosomal subunit.

GTPase that plays an essential role in the late steps of ribosome biogenesis. The protein is GTPase Der of Staphylococcus aureus (strain USA300).